A 277-amino-acid chain; its full sequence is Caspase-3 (277 aa).

An N-acetylmethionine modification is found at Met1. 2 propeptides span residues 1–9 and 10–28; these read MDNNETSVD and SKSI…KSMD. N6-acetyllysine is present on Lys11. Ser26 carries the post-translational modification Phosphoserine. Active-site residues include His121 and Cys163. At Cys163 the chain carries S-nitrosocysteine; in inhibited form.

It belongs to the peptidase C14A family. Heterotetramer that consists of two anti-parallel arranged heterodimers, each one formed by a 17 kDa (p17) and a 12 kDa (p12) subunit. Interacts with BIRC6/bruce. Post-translationally, cleavage by granzyme B, caspase-6, caspase-8 and caspase-10 generates the two active subunits. Additional processing of the propeptides is likely due to the autocatalytic activity of the activated protease. Active heterodimers between the small subunit of caspase-7 protease and the large subunit of caspase-3 also occur and vice versa. In terms of processing, S-nitrosylated on its catalytic site cysteine in unstimulated cell lines and denitrosylated upon activation of the Fas apoptotic pathway, associated with an increase in intracellular caspase activity. Fas therefore activates caspase-3 not only by inducing the cleavage of the caspase zymogen to its active subunits, but also by stimulating the denitrosylation of its active site thiol. Ubiquitinated by BIRC6; this activity is inhibited by DIABLO/SMAC. Expressed in heart, brain, liver, and muscle but not in kidney or testis.

It localises to the cytoplasm. It carries out the reaction Strict requirement for an Asp residue at positions P1 and P4. It has a preferred cleavage sequence of Asp-Xaa-Xaa-Asp-|- with a hydrophobic amino-acid residue at P2 and a hydrophilic amino-acid residue at P3, although Val or Ala are also accepted at this position.. Inhibited by BIRC6; following inhibition of BIRC6-caspase binding by DIABLO/SMAC, BIRC6 is subjected to caspase cleavage, leading to an increase in active caspases. In terms of biological role, involved in the activation cascade of caspases responsible for apoptosis execution. At the onset of apoptosis, it proteolytically cleaves poly(ADP-ribose) polymerase PARP1 at a '216-Asp-|-Gly-217' bond. Cleaves and activates sterol regulatory element binding proteins (SREBPs) between the basic helix-loop-helix leucine zipper domain and the membrane attachment domain. Cleaves and activates caspase-6, -7 and -9 (CASP6, CASP7 and CASP9, respectively). Cleaves and inactivates interleukin-18 (IL18). Triggers cell adhesion in sympathetic neurons through RET cleavage. Cleaves IL-1 beta between an Asp and an Ala, releasing the mature cytokine which is involved in a variety of inflammatory processes. Cleaves and inhibits serine/threonine-protein kinase AKT1 in response to oxidative stress. Acts as an inhibitor of type I interferon production during virus-induced apoptosis by mediating cleavage of antiviral proteins CGAS, IRF3 and MAVS, thereby preventing cytokine overproduction. Also involved in pyroptosis by mediating cleavage and activation of gasdermin-E (GSDME). Cleaves XRCC4 and phospholipid scramblase proteins XKR4, XKR8 and XKR9, leading to promote phosphatidylserine exposure on apoptotic cell surface. Cleaves BIRC6 following inhibition of BIRC6-caspase binding by DIABLO/SMAC. This chain is Caspase-3 (Casp3), found in Rattus norvegicus (Rat).